We begin with the raw amino-acid sequence, 130 residues long: Small ribosomal subunit protein uS8 (130 aa).

This sequence belongs to the universal ribosomal protein uS8 family. In terms of assembly, part of the 30S ribosomal subunit. Contacts proteins S5 and S12.

In terms of biological role, one of the primary rRNA binding proteins, it binds directly to 16S rRNA central domain where it helps coordinate assembly of the platform of the 30S subunit. The sequence is that of Small ribosomal subunit protein uS8 from Salmonella arizonae (strain ATCC BAA-731 / CDC346-86 / RSK2980).